The sequence spans 318 residues: Lipoyl synthase (318 aa).

[4Fe-4S] cluster contacts are provided by cysteine 64, cysteine 69, cysteine 75, cysteine 90, cysteine 94, cysteine 97, and serine 304. Positions 76-293 (FSGGTATFMI…AEEGYKMGFK (218 aa)) constitute a Radical SAM core domain.

The protein belongs to the radical SAM superfamily. Lipoyl synthase family. The cofactor is [4Fe-4S] cluster.

The protein localises to the cytoplasm. The catalysed reaction is [[Fe-S] cluster scaffold protein carrying a second [4Fe-4S](2+) cluster] + N(6)-octanoyl-L-lysyl-[protein] + 2 oxidized [2Fe-2S]-[ferredoxin] + 2 S-adenosyl-L-methionine + 4 H(+) = [[Fe-S] cluster scaffold protein] + N(6)-[(R)-dihydrolipoyl]-L-lysyl-[protein] + 4 Fe(3+) + 2 hydrogen sulfide + 2 5'-deoxyadenosine + 2 L-methionine + 2 reduced [2Fe-2S]-[ferredoxin]. Its pathway is protein modification; protein lipoylation via endogenous pathway; protein N(6)-(lipoyl)lysine from octanoyl-[acyl-carrier-protein]: step 2/2. Functionally, catalyzes the radical-mediated insertion of two sulfur atoms into the C-6 and C-8 positions of the octanoyl moiety bound to the lipoyl domains of lipoate-dependent enzymes, thereby converting the octanoylated domains into lipoylated derivatives. This is Lipoyl synthase from Pseudomonas syringae pv. tomato (strain ATCC BAA-871 / DC3000).